The primary structure comprises 417 residues: Serine hydroxymethyltransferase (417 aa).

Residues Leu122 and 126–128 each bind (6S)-5,6,7,8-tetrahydrofolate; that span reads GHL. Lys230 carries the N6-(pyridoxal phosphate)lysine modification. (6S)-5,6,7,8-tetrahydrofolate is bound at residue 355-357; the sequence is SPF.

Belongs to the SHMT family. As to quaternary structure, homodimer. Requires pyridoxal 5'-phosphate as cofactor.

The protein resides in the cytoplasm. The catalysed reaction is (6R)-5,10-methylene-5,6,7,8-tetrahydrofolate + glycine + H2O = (6S)-5,6,7,8-tetrahydrofolate + L-serine. The protein operates within one-carbon metabolism; tetrahydrofolate interconversion. It participates in amino-acid biosynthesis; glycine biosynthesis; glycine from L-serine: step 1/1. Its function is as follows. Catalyzes the reversible interconversion of serine and glycine with tetrahydrofolate (THF) serving as the one-carbon carrier. This reaction serves as the major source of one-carbon groups required for the biosynthesis of purines, thymidylate, methionine, and other important biomolecules. Also exhibits THF-independent aldolase activity toward beta-hydroxyamino acids, producing glycine and aldehydes, via a retro-aldol mechanism. In Francisella tularensis subsp. holarctica (strain LVS), this protein is Serine hydroxymethyltransferase.